The following is a 172-amino-acid chain: MEYFNVGKIVNTQGLQGEMRVLSVTDFVEERFKKGQVLALFDEKNQFVMDIEIASHRKQKNFDIIKFKGMYHINDIEKYKGFTLKVAEDQLSDLKDGEFYYHEIIGLGVYEGEELIGKIKEILQPGANDVWVVERHGKRDLLLPYIPPVVLEVDLSNQRVQVELMEGLDDED.

In terms of domain architecture, PRC barrel spans 96–168 (DGEFYYHEII…RVQVELMEGL (73 aa)).

Belongs to the RimM family. As to quaternary structure, binds ribosomal protein uS19.

The protein localises to the cytoplasm. In terms of biological role, an accessory protein needed during the final step in the assembly of 30S ribosomal subunit, possibly for assembly of the head region. Essential for efficient processing of 16S rRNA. May be needed both before and after RbfA during the maturation of 16S rRNA. It has affinity for free ribosomal 30S subunits but not for 70S ribosomes. The protein is Ribosome maturation factor RimM of Streptococcus agalactiae serotype Ia (strain ATCC 27591 / A909 / CDC SS700).